A 1034-amino-acid polypeptide reads, in one-letter code: Glycine dehydrogenase (decarboxylating), mitochondrial (1034 aa).

A mitochondrion-targeting transit peptide spans 1–63; the sequence is MERARRLAML…LNGFGSQVRT (63 aa). Lysine 770 carries the post-translational modification N6-(pyridoxal phosphate)lysine.

Belongs to the GcvP family. As to quaternary structure, homodimer. The glycine cleavage system is composed of four proteins: P, T, L and H. Pyridoxal 5'-phosphate serves as cofactor.

Its subcellular location is the mitochondrion. It catalyses the reaction N(6)-[(R)-lipoyl]-L-lysyl-[glycine-cleavage complex H protein] + glycine + H(+) = N(6)-[(R)-S(8)-aminomethyldihydrolipoyl]-L-lysyl-[glycine-cleavage complex H protein] + CO2. The glycine cleavage system catalyzes the degradation of glycine. The P protein binds the alpha-amino group of glycine through its pyridoxal phosphate cofactor; CO(2) is released and the remaining methylamine moiety is then transferred to the lipoamide cofactor of the H protein. This Flaveria trinervia (Clustered yellowtops) protein is Glycine dehydrogenase (decarboxylating), mitochondrial (GDCSPA).